The following is a 5537-amino-acid chain: Histone-lysine N-methyltransferase 2D (5537 aa).

The interval 1 to 60 (MDSQKLAGEDKDSEPAADGPAASEDPSATESDLPNPHVGEVSVLSSGSPRLQETPQDCSG) is disordered. Ser-27 is modified (phosphoserine). Residues 43–57 (VLSSGSPRLQETPQD) show a composition bias toward polar residues. The C2HC pre-PHD-type 1; degenerate zinc-finger motif lies at 104–149 (GPNEAVLPSEDLSQIGFPEGLTPAHLGEPGGSCWAHHWCAAWSAGV). PHD-type zinc fingers lie at residues 170-218 (QRCS…PEHS), 226-276 (EARC…CKVC), and 273-323 (CKVC…CRVC). An RING-type 1; atypical zinc finger spans residues 229–274 (CAVCEGPGELCDLFFCTSCGHHYHGACLDTALTARKRAGWQCPECK). Residues 276 to 321 (CQACRKPGNDSKMLVCETCDKGYHTFCLKPPMEELPAHSWKCKACR) form an RING-type 2; degenerate zinc finger. 4 disordered regions span residues 368–387 (VCSRFSPPEPGDTPTDEPDA), 393–416 (QGQPKGGHVTSMQPKEPGPLQCEA), 436–1331 (EEMP…RLKS), and 1340–1359 (VVADIDSSPSKEEEEEDDDT). A 15 X 5 AA repeats of S/P-P-P-E/P-E/A region spans residues 439–668 (PLLPPPEESP…VSRLSPPPEE (230 aa)). Residues 440–473 (LLPPPEESPLSPPPEESPTSPPPEASRLSPPPEE) show a composition bias toward pro residues. 3 tandem repeats follow at residues 442 to 446 (PPPEE), 460 to 464 (PPPEA), and 469 to 473 (PPPEE). Low complexity predominate over residues 474–483 (LPASPLPEAL). A compositionally biased stretch (pro residues) spans 494–509 (LSPPPEESPLSPPPES). 2 repeat units span residues 496-500 (PPPEE) and 504-508 (SPPPE). The segment covering 510-519 (SPFSPLEESP) has biased composition (low complexity). Pro residues-rich tracts occupy residues 520–547 (LSPPEESPPSPALETPLSPPPEASPLSP) and 554–595 (LSPP…PPPE). 5 tandem repeats follow at residues 521–525 (SPPEE), 555–559 (SPPPE), 564–568 (SPPPE), 573–577 (SPPPE), and 582–586 (SPPPE). Low complexity predominate over residues 596-607 (ASRLFPPFEESP). A compositionally biased stretch (pro residues) spans 608-649 (LSPPPEESPLSPPPEASRLSPPPEDSPMSPPPEESPMSPPPE). 4 consecutive repeat copies span residues 609–613 (SPPPE), 618–622 (SPPPE), 627–631 (SPPPE), and 645–649 (SPPPE). Over residues 650–662 (VSRLSPLPVVSRL) the composition is skewed to low complexity. Repeat 15 spans residues 663–667 (SPPPE). Residues 663–712 (SPPPEESPLSPPPEESPTSPPPEASRLSPPPEDSPTSPPPEDSPASPPPE) show a composition bias toward pro residues. Low complexity predominate over residues 713–725 (DSLMSLPLEESPL). Phosphoserine is present on Ser-744. Basic and acidic residues-rich tracts occupy residues 745–760 (PRPEEPHLSPRPEEPH) and 845–869 (RPEESHLSPELEKPPLSPRPEKPPE). 2 stretches are compositionally biased toward low complexity: residues 889-903 (PSLSPLLGEPALSEP) and 911-928 (LPEELPLSPSGEPSLSPQ). Over residues 929-940 (LMPPDPLPPPLS) the composition is skewed to pro residues. A compositionally biased stretch (low complexity) spans 941 to 954 (PIITAAAPPALSPL). Residues 994–1008 (EPVPPMILPPSPGSP) show a composition bias toward pro residues. Residues 1048-1057 (PLSVPSPLSP) show a composition bias toward low complexity. Positions 1068 to 1080 (AELHEMETEKVSE) are enriched in basic and acidic residues. Ser-1151 is modified (phosphoserine). A Phosphothreonine modification is found at Thr-1195. The segment covering 1207–1216 (EISNLSQGDA) has biased composition (polar residues). Position 1249 is a phosphoserine (Ser-1249). Thr-1267 bears the Phosphothreonine mark. At Ser-1270 the chain carries Phosphoserine. Basic residues-rich tracts occupy residues 1289–1302 (GRRRSSPARSRIKQ) and 1310–1329 (GRRRPRGGAHGGRGRGRARL). 3 PHD-type zinc fingers span residues 1377 to 1430 (QDMC…CIVC), 1427 to 1477 (CIVC…CVSC), and 1504 to 1559 (LVTC…CQPY). An RING-type 3; atypical zinc finger spans residues 1507 to 1557 (CPICHAPYVEEDLLIQCRHCERWMHAGCESLFTEDDVEQAADEGFDCVSCQ). Ser-1606 bears the Phosphoserine mark. Disordered stretches follow at residues 1610-1767 (KRRQ…LEDM), 1793-1889 (GVGR…MESK), 1904-2002 (EQHL…NQRS), and 2165-2683 (PQVP…QRQR). The segment covering 1637–1666 (PDDKKDGDLDTDELLKGEGGVEHMECEIKL) has biased composition (basic and acidic residues). Position 1671 is a phosphoserine (Ser-1671). Positions 1675-1685 (EPGKEETEESK) are enriched in basic and acidic residues. Basic residues-rich tracts occupy residues 1702-1712 (RQRKSHTRTKK) and 1753-1762 (KQQRRGRKKS). 2 stretches are compositionally biased toward basic and acidic residues: residues 1806–1825 (AKGDGGSERKELPTSQKGDD) and 1832–1841 (EESRGLEGKA). Ser-1820 and Ser-1834 each carry phosphoserine. Residues Thr-1843 and Thr-1865 each carry the phosphothreonine modification. The span at 1874 to 1889 (DLDRISTEELPKMESK) shows a compositional bias: basic and acidic residues. Residues 1979–1990 (TTPSTPTTPTTE) are compositionally biased toward low complexity. A compositionally biased stretch (pro residues) spans 2190 to 2209 (PTAPPTYPPYPSPTGAPAQP). Residue Ser-2239 is modified to Phosphoserine. A Phosphothreonine modification is found at Thr-2240. Lys-2246 bears the N6-acetyllysine mark. Ser-2260 and Ser-2274 each carry phosphoserine. A compositionally biased stretch (basic and acidic residues) spans 2280-2292 (ESRKALEVKKEEL). Phosphoserine is present on residues Ser-2309, Ser-2311, and Ser-2342. Pro residues-rich tracts occupy residues 2350–2365 (QEPPPAQALAPSPPSH) and 2379–2393 (AQPPLTPRPQPPPPE). Low complexity-rich tracts occupy residues 2409–2431 (SRVPASPQSQSSSQSPLTPRPLS) and 2494–2505 (FPAALPAGPAGE). An Asymmetric dimethylarginine modification is found at Arg-2535. Residues 2547–2560 (LKPPVPQPGLPPPH) are compositionally biased toward pro residues. Over residues 2574–2584 (KPQSTNYTVAT) the composition is skewed to polar residues. The segment covering 2589-2609 (PSGSPLGPSSGSTGESYGLSP) has biased composition (low complexity). Residues 2610–2621 (LRPPSVLPPPAP) are compositionally biased toward pro residues. Ser-2640 bears the Phosphoserine mark. Residues 2669–2707 (MSGLSQTELEKQRQRQRLRELLIRQQIQRNTLRQEKETA) are a coiled coil. An LXXLL motif 1 motif is present at residues 2686–2690 (LRELL). Disordered stretches follow at residues 2697–2814 (RNTL…QQQQ) and 2835–2996 (ARFP…LDDD). Residues 2707–2722 (AAAAAGAVGPPGSWGA) show a composition bias toward low complexity. 2 stretches are compositionally biased toward polar residues: residues 2733–2746 (SRGQTPFAGTQDKS) and 2781–2790 (PSSMDVNSRQ). Arg-2836 carries the asymmetric dimethylarginine modification. Over residues 2931-2940 (PQKPSAPPAP) the composition is skewed to pro residues. The LXXLL motif 2 motif lies at 3038–3042 (LDDLL). The tract at residues 3078–3110 (EKAEREALLRGVEPGPLGPEERPPPAADASEPR) is disordered. N6-acetyllysine is present on Lys-3079. At Ser-3130 the chain carries Phosphoserine. Disordered regions lie at residues 3147 to 3209 (ANSL…GSSL) and 3263 to 3339 (KQQL…AHAL). Thr-3197 bears the Phosphothreonine mark. Composition is skewed to low complexity over residues 3198-3209 (PSPLSGPGGSSL), 3263-3289 (KQQLSAQLQPAQQQQQQQQQHSLLSAP), and 3301-3320 (GSSPSLAGSQQQLSLGLAGA). A Phosphoserine modification is found at Ser-3199. The stretch at 3249-3282 (IEDLLEHEKKELQKKQQLSAQLQPAQQQQQQQQQ) forms a coiled coil. Residues 3325 to 3334 (LPQPLMPTQP) are compositionally biased toward pro residues. Lys-3433 bears the N6-acetyllysine mark. Disordered stretches follow at residues 3462-3499 (LSGGPSSDLQNHVAAGSGQERSAGDPSQPRPNPPTFAQ) and 3596-3673 (RNKQ…GPFL). A coiled-coil region spans residues 3562–3614 (EKLKLVTEQQSKIQKQLDQVRKQQKEHTNLMAEYRNKQQQQQQQQQQQQQQHS). Low complexity-rich tracts occupy residues 3599–3612 (QQQQQQQQQQQQQQ) and 3631–3643 (LPGQLLPGHGLQP). Positions 3714–3750 (RLLQERQLQLQQQRMQLAQKLQQQQQQQQQQQHLLGQ) form a coiled coil. Position 3727 is an asymmetric dimethylarginine (Arg-3727). Residues 3758-3802 (QQGPGVQTNQALGPKPQGLMPPSSHQGLLVQQLSPQPPQGPQGML) form a disordered region. A coiled-coil region spans residues 3897–3975 (LQQLQQQQQL…FQQQQQQQQM (79 aa)). Residues 3984-4191 (LLSPQQQQQQ…GQGLPGVGIM (208 aa)) are disordered. Positions 4012 to 4023 (PGALGPTLLLTG) are enriched in low complexity. Over residues 4024 to 4045 (KEQNTVDPAVSSEATEGPSTHQ) the composition is skewed to polar residues. Residues 4073–4108 (SQLLLVQPQPQPQPSSLQLQPPLRLPGQQQQQVSLL) are compositionally biased toward low complexity. Residues 4111–4120 (AGGGSHGQLG) show a composition bias toward gly residues. Residues 4137-4154 (PSVSLGDQPGSMTQNLLG) are compositionally biased toward polar residues. An Asymmetric dimethylarginine modification is found at Arg-4198. Ser-4215 bears the Phosphoserine mark. An LXXLL motif 3 motif is present at residues 4222–4226 (LQALL). 2 disordered regions span residues 4233–4398 (QSQA…VPGH) and 4410–4452 (ASQL…LLLA). Polar residues predominate over residues 4237–4251 (VRQTPPYQEPGTQTS). Positions 4252-4282 (PLQGLLGCQPQLGGFPGPQTGPLQELGAGPR) are enriched in low complexity. The LXXLL motif 4 motif lies at 4253 to 4257 (LQGLL). Pro residues predominate over residues 4283–4293 (PQGPPRLPAPP). Composition is skewed to low complexity over residues 4294 to 4305 (GALSTGPVLGPV) and 4320 to 4331 (PSQLPSPSSQLP). Residues 4338-4357 (PTHPGTPKPQGPTLEPPPGR) are compositionally biased toward pro residues. A Phosphoserine modification is found at Ser-4359. An LXXLL motif 5 motif is present at residues 4463–4467 (LQKLL). At Lys-4465 the chain carries N6-acetyllysine. Disordered stretches follow at residues 4503–4544 (QGTP…KEDG) and 4613–4727 (KNNL…HLGS). A compositionally biased stretch (pro residues) spans 4619–4633 (PPTPPSSLPPTPPPS). Over residues 4648-4673 (LGEHPKDAASARDSERALRDTSEVKS) the composition is skewed to basic and acidic residues. Ser-4738 carries the phosphoserine modification. Lys-4756 participates in a covalent cross-link: Glycyl lysine isopeptide (Lys-Gly) (interchain with G-Cter in SUMO2). N6-acetyllysine is present on Lys-4776. Phosphoserine occurs at positions 4822 and 4849. The disordered stretch occupies residues 4822–4857 (SPARAGTEPKKGEAEGPGGKEKGLEGKSPDTGPDWL). Residues 4828–4849 (TEPKKGEAEGPGGKEKGLEGKS) show a composition bias toward basic and acidic residues. Lys-4880 participates in a covalent cross-link: Glycyl lysine isopeptide (Lys-Gly) (interchain with G-Cter in SUMO2). Positions 4905–4980 (QLSAPPPEEP…GEDSRPPRLK (76 aa)) are disordered. The segment covering 4908–4931 (APPPEEPSPPPSPLAPSPASPPTE) has biased composition (pro residues). Residues 4932-4941 (PLVELPTEPL) are compositionally biased toward low complexity. Residues 4966–4976 (RPPEEGEDSRP) show a composition bias toward basic and acidic residues. The short motif at 4990–4994 (LRLLL) is the LXXLL motif 6 element. The C2HC pre-PHD-type 2 zinc finger occupies 5029–5069 (MRRCCFCHEEGDGATDGPARLLNLDLDLWVHLNCALWSTEV). The PHD-type 7 zinc-finger motif lies at 5090 to 5137 (TKCSLCQRTGATSSCNRMRCPNVYHFACAIRAKCMFFKDKTMLCPMHK). The 61-residue stretch at 5175 to 5235 (LHMFRVGGLV…CCYRCSIGEN (61 aa)) folds into the FYR N-terminal domain. The FYR C-terminal domain maps to 5236–5321 (NGRPEFVIKV…ESCQNYLFRY (86 aa)). The WDR5 interaction motif (WIN) motif lies at 5337 to 5342 (GCARSE). In terms of domain architecture, SET spans 5397-5513 (NNVYLARSRI…KGEELTYDYQ (117 aa)). S-adenosyl-L-methionine is bound by residues Tyr-5451 and 5474-5475 (NH). Zn(2+) is bound by residues Cys-5477, Cys-5525, Cys-5527, and Cys-5532. Residues 5521-5537 (HKIPCHCGAWNCRKWMN) enclose the Post-SET domain.

This sequence belongs to the class V-like SAM-binding methyltransferase superfamily. Histone-lysine methyltransferase family. TRX/MLL subfamily. In terms of assembly, component of the MLL2 complex (also named ASCOM complex), at least composed of catalytic subunit KMT2D/MLL2, ASH2L, RBBP5, WDR5, NCOA6, DPY30, KDM6A, PAXIP1/PTIP, PAGR1 and alpha- and beta-tubulin. Forms a core complex with the evolutionary conserved subcomplex WRAD composed of WDR5, RBBP5, ASH2L/ASH2 and DPY30 subunits; WRAD differentially stimulates the methyltransferase activity. Interacts with ESR1; interaction is direct. Interacts (via WIN motif) with WDR5. As to expression, expressed in most adult tissues, including a variety of hematoipoietic cells, with the exception of the liver.

Its subcellular location is the nucleus. The catalysed reaction is L-lysyl(4)-[histone H3] + S-adenosyl-L-methionine = N(6)-methyl-L-lysyl(4)-[histone H3] + S-adenosyl-L-homocysteine + H(+). Histone methyltransferase that catalyzes methyl group transfer from S-adenosyl-L-methionine to the epsilon-amino group of 'Lys-4' of histone H3 (H3K4). Part of chromatin remodeling machinery predominantly forms H3K4me1 methylation marks at active chromatin sites where transcription and DNA repair take place. Acts as a coactivator for estrogen receptor by being recruited by ESR1, thereby activating transcription. The polypeptide is Histone-lysine N-methyltransferase 2D (KMT2D) (Homo sapiens (Human)).